We begin with the raw amino-acid sequence, 72 residues long: UPF0154 protein lhv_1362 (72 aa).

The helical transmembrane segment at 3–23 threads the bilayer; that stretch reads LGLAIFLIIIALLVGAVAGFY.

The protein belongs to the UPF0154 family.

It is found in the cell membrane. The chain is UPF0154 protein lhv_1362 from Lactobacillus helveticus (strain DPC 4571).